We begin with the raw amino-acid sequence, 131 residues long: MSRSLGIPVKLLHEASGHIVTVELKSGELYRGSMIECEDNWNCQLEDITYTAKDGKVSQLEHVFIRGSKVRFMVIPDILKHAPMFKRLDARIKGKSSSLGVGRGRGAMRGKPAAGPGRGTGGRGAVPPVRR.

Positions isoleucine 7–leucine 79 constitute a Sm domain. Residues serine 96–arginine 131 are disordered.

It belongs to the snRNP core protein family. Expressed in young seedlings, roots, leaves, flowers and immature siliques.

It localises to the cytoplasm. The protein localises to the cytosol. It is found in the nucleus. Core component of the spliceosomal U1, U2, U4 and U5 small nuclear ribonucleoproteins (snRNPs), the building blocks of the spliceosome. May play a major role in the splicing of cellular pre-mRNAs. Required for normal plant development. This Arabidopsis thaliana (Mouse-ear cress) protein is Small nuclear ribonucleoprotein SmD3b.